Here is a 424-residue protein sequence, read N- to C-terminus: GTPase Obg (424 aa).

The Obg domain maps to 1–158 (MFYDQAKIYV…RNLLLELKLL (158 aa)). Residues 159–329 (ADVGLVGFPN…LVYAAAKALP (171 aa)) enclose the OBG-type G domain. Residues 165 to 172 (GFPNVGKS), 190 to 194 (FTTLV), 212 to 215 (DIPG), 282 to 285 (NKMD), and 310 to 312 (SAA) each bind GTP. Mg(2+) is bound by residues Ser-172 and Thr-192. Residues 347 to 424 (TQASAPHRFE…IAGIEFEWEE (78 aa)) form the OCT domain.

This sequence belongs to the TRAFAC class OBG-HflX-like GTPase superfamily. OBG GTPase family. As to quaternary structure, monomer. The cofactor is Mg(2+).

It is found in the cytoplasm. An essential GTPase which binds GTP, GDP and possibly (p)ppGpp with moderate affinity, with high nucleotide exchange rates and a fairly low GTP hydrolysis rate. Plays a role in control of the cell cycle, stress response, ribosome biogenesis and in those bacteria that undergo differentiation, in morphogenesis control. The protein is GTPase Obg of Desulfitobacterium hafniense (strain Y51).